Consider the following 477-residue polypeptide: MDLFLYNTLSREKERFLPVNDPVKLYTCGPTVYDYAHIGNFRTYIFEDLLKRVLLFLGYSVYHVMNITDVDDKTLAGARKKGCSLEKYCQPYIHAFFADLETLHILKADAYPHATHYIPQMIEAIQQLINQGVAYIGQDQSVYFSISQFPNYGALSHLNLEELRNSARIDADEYDKDNLCDFVLWKAYDPDRDGEIFWESPFGKGRPGWHLECSIMSISLLGQSLDIHAGGVDNIFPHHENEIAQSESLSHKPFVRYWLHSHHLLVDRKKMSKSLGNFFTLRDLLDQGFSGEEVRYLLLQGHYRTQLNFTQEGLHASRQSLKRLRDFICRLEDPSYPDDIIHPEVATACQSFLETFITSLTNDLNISSSLAALFDFIRKINSSIDQHTGIQTETDSSVFSKQDAQHILALLRKIDQVLGVLPFSQPDIPEEVLLLVEQREAARKVKNWQEADRLRDEILSRGFAIEDGKTGMKVKKL.

Residue cysteine 28 participates in Zn(2+) binding. The 'HIGH' region signature appears at 30–40 (PTVYDYAHIGN). Residues cysteine 213, histidine 238, and glutamate 242 each coordinate Zn(2+). The short motif at 270–274 (KMSKS) is the 'KMSKS' region element. Lysine 273 contacts ATP.

Belongs to the class-I aminoacyl-tRNA synthetase family. In terms of assembly, monomer. Requires Zn(2+) as cofactor.

The protein resides in the cytoplasm. The enzyme catalyses tRNA(Cys) + L-cysteine + ATP = L-cysteinyl-tRNA(Cys) + AMP + diphosphate. The sequence is that of Cysteine--tRNA ligase from Chlamydia trachomatis serovar A (strain ATCC VR-571B / DSM 19440 / HAR-13).